The sequence spans 430 residues: tRNA(Ile)-lysidine synthase (430 aa).

Position 24–29 (24–29) interacts with ATP; it reads SGGLDS.

Belongs to the tRNA(Ile)-lysidine synthase family.

It is found in the cytoplasm. It carries out the reaction cytidine(34) in tRNA(Ile2) + L-lysine + ATP = lysidine(34) in tRNA(Ile2) + AMP + diphosphate + H(+). Ligates lysine onto the cytidine present at position 34 of the AUA codon-specific tRNA(Ile) that contains the anticodon CAU, in an ATP-dependent manner. Cytidine is converted to lysidine, thus changing the amino acid specificity of the tRNA from methionine to isoleucine. In Haemophilus influenzae (strain PittGG), this protein is tRNA(Ile)-lysidine synthase.